We begin with the raw amino-acid sequence, 1206 residues long: DNA-directed RNA polymerase subunit beta' (1206 aa).

Zn(2+)-binding residues include C60, C62, C75, and C78. D449, D451, and D453 together coordinate Mg(2+). Zn(2+)-binding residues include C818, C892, C899, and C902.

It belongs to the RNA polymerase beta' chain family. In terms of assembly, the RNAP catalytic core consists of 2 alpha, 1 beta, 1 beta' and 1 omega subunit. When a sigma factor is associated with the core the holoenzyme is formed, which can initiate transcription. It depends on Mg(2+) as a cofactor. Requires Zn(2+) as cofactor.

It carries out the reaction RNA(n) + a ribonucleoside 5'-triphosphate = RNA(n+1) + diphosphate. DNA-dependent RNA polymerase catalyzes the transcription of DNA into RNA using the four ribonucleoside triphosphates as substrates. This is DNA-directed RNA polymerase subunit beta' from Shouchella clausii (strain KSM-K16) (Alkalihalobacillus clausii).